The chain runs to 398 residues: S-adenosylmethionine synthase (398 aa).

His17 is an ATP binding site. Asp19 provides a ligand contact to Mg(2+). A K(+)-binding site is contributed by Glu45. Residues Glu58 and Gln101 each contribute to the L-methionine site. The segment at 101 to 111 (QSPDIAQGVDK) is flexible loop. ATP is bound by residues 176–178 (DGK), 243–244 (RF), Asp252, 258–259 (RK), and Lys279. Asp252 is a binding site for L-methionine. Lys283 is a binding site for L-methionine.

Belongs to the AdoMet synthase family. In terms of assembly, homotetramer; dimer of dimers. Mg(2+) is required as a cofactor. It depends on K(+) as a cofactor.

The protein resides in the cytoplasm. The catalysed reaction is L-methionine + ATP + H2O = S-adenosyl-L-methionine + phosphate + diphosphate. Its pathway is amino-acid biosynthesis; S-adenosyl-L-methionine biosynthesis; S-adenosyl-L-methionine from L-methionine: step 1/1. In terms of biological role, catalyzes the formation of S-adenosylmethionine (AdoMet) from methionine and ATP. The overall synthetic reaction is composed of two sequential steps, AdoMet formation and the subsequent tripolyphosphate hydrolysis which occurs prior to release of AdoMet from the enzyme. The polypeptide is S-adenosylmethionine synthase (Staphylococcus haemolyticus (strain JCSC1435)).